The chain runs to 312 residues: NADH-ubiquinone oxidoreductase chain 1 (312 aa).

A run of 8 helical transmembrane segments spans residues 3–23 (FILS…SVAF), 77–97 (ISPI…PFFV), 104–124 (LGGL…MVAG), 150–170 (LALI…VYFF), 174–194 (IYVW…TISL), 226–246 (LIFM…CVIF), 250–270 (DVFN…FIWA), and 289–309 (CFLS…ILLF).

This sequence belongs to the complex I subunit 1 family.

The protein resides in the mitochondrion inner membrane. It carries out the reaction a ubiquinone + NADH + 5 H(+)(in) = a ubiquinol + NAD(+) + 4 H(+)(out). In terms of biological role, core subunit of the mitochondrial membrane respiratory chain NADH dehydrogenase (Complex I) that is believed to belong to the minimal assembly required for catalysis. Complex I functions in the transfer of electrons from NADH to the respiratory chain. The immediate electron acceptor for the enzyme is believed to be ubiquinone. This Drosophila subobscura (Fruit fly) protein is NADH-ubiquinone oxidoreductase chain 1 (mt:ND1).